We begin with the raw amino-acid sequence, 1704 residues long: Nonribosomal peptide synthetase ivoA (1704 aa).

An adenylation region spans residues 234 to 620 (EEQAIARPDQ…HGRKDLEVKI (387 aa)). The region spanning 748–827 (NLISDPSDSM…EMATKTSAVE (80 aa)) is the Carrier domain. S785 is subject to O-(pantetheine 4'-phosphoryl)serine. An epimerization (E) domain region spans residues 840–1266 (FPLSPVQQMY…QELLETAVER (427 aa)). The tract at residues 1325–1477 (VQGDWTIEKT…AQSSTPSARK (153 aa)) is condensation.

It belongs to the NRP synthetase family.

It catalyses the reaction L-tryptophan + ATP + H2O = D-tryptophan + AMP + diphosphate + H(+). The protein operates within pigment biosynthesis. In terms of biological role, nonribosomal peptide synthetase; part of the pathway that mediates the biosynthesis of the gray-brown conidiophore pigment. The first step of the pathway is performed by the nonribosomal peptide synthetase ivoA that catalyzes ATP-dependent unidirectional stereoinversion of L-tryptophan to D-tryptophan with complete conversion. While the stereoinversion is catalyzed by the epimerization (E) domain of ivoA, the terminal condensation (C) domain stereoselectively hydrolyzes D-tryptophanyl-S-phosphopantetheine thioester and thus represents a non-canonical C domain function. D-tryptophan is acetylated, probably by an endogenous acetyltransferase. N-acetyltryptophan is further 6-hydroxylated into N-acetyl-6-hydroxytryptophan (AHT) by the cytochrome P450 monooxygenase ivoC. N-acetyl-6-hydroxytryptophan is substrate of the N-acetyl-6-hydroxytryptophan oxidase ivoB to produce the gray-brown conidiophore pigment. The polypeptide is Nonribosomal peptide synthetase ivoA (Emericella nidulans (strain FGSC A4 / ATCC 38163 / CBS 112.46 / NRRL 194 / M139) (Aspergillus nidulans)).